We begin with the raw amino-acid sequence, 182 residues long: MTQYFRSLAFFLLPVPATAMACDGWPSWARGACQRVDQIWNEGGNDLYLTGYSWHNRAMYSSDKIRSFNELAWGGGLGKSIYDEDGDWQGLYAMAFLDSHSDIEPIAGYGFQKIGRIGADTRLGIGYTVFLTSRSDIMSRVPFPGILPLVSAGYRDATLYATYIPGGKGNGNVLFMFGRWEF.

Residues 1–21 (MTQYFRSLAFFLLPVPATAMA) form the signal peptide. C22 is lipidated: N-palmitoyl cysteine. Residue C22 is the site of S-diacylglycerol cysteine attachment. Catalysis depends on residues H55, D98, and S99.

The protein belongs to the lipid A palmitoyltransferase family. In terms of assembly, homodimer.

It localises to the cell outer membrane. The enzyme catalyses a lipid A + a 1,2-diacyl-sn-glycero-3-phosphocholine = a hepta-acyl lipid A + a 2-acyl-sn-glycero-3-phosphocholine. It carries out the reaction a lipid IVA + a 1,2-diacyl-sn-glycero-3-phosphocholine = a lipid IVB + a 2-acyl-sn-glycero-3-phosphocholine. It catalyses the reaction a lipid IIA + a 1,2-diacyl-sn-glycero-3-phosphocholine = a lipid IIB + a 2-acyl-sn-glycero-3-phosphocholine. Functionally, transfers a fatty acid residue from the sn-1 position of a phospholipid to the N-linked hydroxyfatty acid chain on the proximal unit of lipid A or its precursors. The chain is Lipid A acyltransferase PagP from Bordetella pertussis (strain CS).